A 385-amino-acid polypeptide reads, in one-letter code: Probable caffeine synthase MTL1 (385 aa).

S-adenosyl-L-homocysteine-binding residues include Y18, C62, N67, D101, L102, S140, and F141. Positions 158, 161, and 162 each coordinate caffeine. Residue N179 participates in Mg(2+) binding. T238 serves as a coordination point for caffeine. Mg(2+) is bound by residues D261, F263, and N264. Position 369 (Y369) interacts with caffeine.

The protein belongs to the methyltransferase superfamily. Type-7 methyltransferase family. The cofactor is Mg(2+).

Its pathway is alkaloid biosynthesis. Functionally, may be involved in the biosynthesis of caffeine. The protein is Probable caffeine synthase MTL1 of Coffea canephora (Robusta coffee).